Here is a 138-residue protein sequence, read N- to C-terminus: MGGWMLCAPPIYTPHTNSWTERWDRTSWWRWSAQRWSGWSFKIVRANKALRVMAKTKMPLVLIPPSPNKPYSKLAINQELHLIPPKKTSPATSSSLKPRPGPRGCLNARLSWRCPTLSRKVRVPTIKVPMVRAPSTPP.

Positions 84–104 (PPKKTSPATSSSLKPRPGPRG) are disordered. The segment covering 85-98 (PKKTSPATSSSLKP) has biased composition (low complexity).

It to M.pneumoniae MPN_413 and MPN_463.

This is an uncharacterized protein from Mycoplasma pneumoniae (strain ATCC 29342 / M129 / Subtype 1) (Mycoplasmoides pneumoniae).